A 253-amino-acid polypeptide reads, in one-letter code: Phosphoribosylaminoimidazole-succinocarboxamide synthase (253 aa).

This sequence belongs to the SAICAR synthetase family.

The enzyme catalyses 5-amino-1-(5-phospho-D-ribosyl)imidazole-4-carboxylate + L-aspartate + ATP = (2S)-2-[5-amino-1-(5-phospho-beta-D-ribosyl)imidazole-4-carboxamido]succinate + ADP + phosphate + 2 H(+). It functions in the pathway purine metabolism; IMP biosynthesis via de novo pathway; 5-amino-1-(5-phospho-D-ribosyl)imidazole-4-carboxamide from 5-amino-1-(5-phospho-D-ribosyl)imidazole-4-carboxylate: step 1/2. This is Phosphoribosylaminoimidazole-succinocarboxamide synthase from Jannaschia sp. (strain CCS1).